We begin with the raw amino-acid sequence, 114 residues long: Progonadoliberin-2 (114 aa).

The signal sequence occupies residues 1–24 (MASSRRGLLLLLMLLTAHPGPSEA). Residue Gly34 is modified to Glycine amide. Residues 35–59 (GKRALSSAQDPQNALRPPAGSPAQA) form a disordered region.

This sequence belongs to the GnRH family.

It is found in the secreted. Functionally, stimulates the secretion of gonadotropins; it stimulates the secretion of both luteinizing and follicle-stimulating hormones. This chain is Progonadoliberin-2 (GNRH2), found in Macaca mulatta (Rhesus macaque).